Consider the following 405-residue polypeptide: MKRTVIMMLDSFGVGAAKDAEAFGDTGSNTFGHIAKACAEGKANDGREGPLKLPNLAKLGLALAAKESTGSFAEGFGDDVEVIGAYGHADELSSGKDTPSGHWEMAGVPVLYEWGYFSDLKDSFPKELTDKILERAGLSGFLGNCHASGTAILEELGEEHMTSGLPIFYTSADSVFQIACHEETFGLENLYTLCQIAREELEPYNIGRVIARPFVGTGPSDFARTGNRKDYAVEPPSKTVLDKLKEAGGEVVSVGKIADIYAHCGITKKVKATGLEALFDATLEQVKQAGDRTIVFTNFVDFDSHYGHRRDIAGYARALEYFDSRLPEMLALLGEEDLLLLTADHGCDPTWQGTDHTRERVPVLAYGAGLAPGSLGRRNSFADIGQSIASYFGLEPMEYGESFVA.

Positions 10, 303, 308, 344, 345, and 356 each coordinate Mn(2+).

Belongs to the phosphopentomutase family. Mn(2+) serves as cofactor.

The protein resides in the cytoplasm. The catalysed reaction is 2-deoxy-alpha-D-ribose 1-phosphate = 2-deoxy-D-ribose 5-phosphate. It catalyses the reaction alpha-D-ribose 1-phosphate = D-ribose 5-phosphate. It functions in the pathway carbohydrate degradation; 2-deoxy-D-ribose 1-phosphate degradation; D-glyceraldehyde 3-phosphate and acetaldehyde from 2-deoxy-alpha-D-ribose 1-phosphate: step 1/2. Isomerase that catalyzes the conversion of deoxy-ribose 1-phosphate (dRib-1-P) and ribose 1-phosphate (Rib-1-P) to deoxy-ribose 5-phosphate (dRib-5-P) and ribose 5-phosphate (Rib-5-P), respectively. The chain is Phosphopentomutase from Shewanella loihica (strain ATCC BAA-1088 / PV-4).